Consider the following 638-residue polypeptide: 1-deoxy-D-xylulose-5-phosphate synthase (638 aa).

Residues H78 and 119–121 (AHS) contribute to the thiamine diphosphate site. D150 is a binding site for Mg(2+). Thiamine diphosphate-binding positions include 151-152 (GS), N179, Y288, and E370. Mg(2+) is bound at residue N179.

Belongs to the transketolase family. DXPS subfamily. In terms of assembly, homodimer. Mg(2+) serves as cofactor. It depends on thiamine diphosphate as a cofactor.

It carries out the reaction D-glyceraldehyde 3-phosphate + pyruvate + H(+) = 1-deoxy-D-xylulose 5-phosphate + CO2. The protein operates within metabolic intermediate biosynthesis; 1-deoxy-D-xylulose 5-phosphate biosynthesis; 1-deoxy-D-xylulose 5-phosphate from D-glyceraldehyde 3-phosphate and pyruvate: step 1/1. Functionally, catalyzes the acyloin condensation reaction between C atoms 2 and 3 of pyruvate and glyceraldehyde 3-phosphate to yield 1-deoxy-D-xylulose-5-phosphate (DXP). In Brucella anthropi (strain ATCC 49188 / DSM 6882 / CCUG 24695 / JCM 21032 / LMG 3331 / NBRC 15819 / NCTC 12168 / Alc 37) (Ochrobactrum anthropi), this protein is 1-deoxy-D-xylulose-5-phosphate synthase.